The primary structure comprises 271 residues: Urease accessory protein UreD (271 aa).

Belongs to the UreD family. As to quaternary structure, ureD, UreF and UreG form a complex that acts as a GTP-hydrolysis-dependent molecular chaperone, activating the urease apoprotein by helping to assemble the nickel containing metallocenter of UreC. The UreE protein probably delivers the nickel.

The protein localises to the cytoplasm. Its function is as follows. Required for maturation of urease via the functional incorporation of the urease nickel metallocenter. The protein is Urease accessory protein UreD of Bacillus sp. (strain TB-90).